The chain runs to 543 residues: Tyrosine-protein kinase Yes (543 aa).

The segment covering Met1–Asn20 has biased composition (basic and acidic residues). The segment at Met1 to Ser45 is disordered. Gly2 carries the N-myristoyl glycine lipid modification. A lipid anchor (S-palmitoyl cysteine; in membrane form) is attached at Cys3. Thr21 carries the phosphothreonine modification. Tyr32 carries the phosphotyrosine modification. Ser40 carries the phosphoserine modification. Residues Gly91–Ser152 form the SH3 domain. The region spanning Trp158 to Cys255 is the SH2 domain. In terms of domain architecture, Protein kinase spans Leu277 to Phe530. ATP-binding positions include Leu283–Val291 and Lys305. 2 positions are modified to phosphotyrosine: Tyr336 and Tyr345. The active-site Proton acceptor is Asp396. The residue at position 426 (Tyr426) is a Phosphotyrosine; by autocatalysis. The residue at position 446 (Tyr446) is a Phosphotyrosine. Residue Tyr537 is modified to Phosphotyrosine; by CSK.

It belongs to the protein kinase superfamily. Tyr protein kinase family. SRC subfamily. In terms of assembly, interacts with YAP1 and CSF1R. Interacts with CTNND1; this interaction allows YES1-mediated activation of FYN and FER and subsequent phosphorylation of CTNND1. Interacts with FASLG. Interacts with IL6ST/gp130. Interacts with SCRIB, when YES1 is in a closed conformation; the interaction facilitates YES1 autophosphorylation. Phosphorylated. Phosphorylation by CSK on the C-terminal tail maintains the enzyme in an inactive state. Autophosphorylation at Tyr-426 maintains enzyme activity by blocking CSK-mediated inhibition. Post-translationally, palmitoylation at Cys-3 promotes membrane localization. In terms of tissue distribution, expressed in the epithelial cells of renal proximal tubules and stomach as well as hematopoietic cells in the bone marrow and spleen in the fetal tissues. In adult, expressed in epithelial cells of the renal proximal tubules and present in keratinocytes in the basal epidermal layer of epidermis.

It localises to the cell membrane. Its subcellular location is the cytoplasm. It is found in the cytoskeleton. The protein localises to the microtubule organizing center. The protein resides in the centrosome. It localises to the cytosol. Its subcellular location is the cell junction. It catalyses the reaction L-tyrosyl-[protein] + ATP = O-phospho-L-tyrosyl-[protein] + ADP + H(+). Non-receptor protein tyrosine kinase that is involved in the regulation of cell growth and survival, apoptosis, cell-cell adhesion, cytoskeleton remodeling, and differentiation. Stimulation by receptor tyrosine kinases (RTKs) including EGFR, PDGFR, CSF1R and FGFR leads to recruitment of YES1 to the phosphorylated receptor, and activation and phosphorylation of downstream substrates. Upon EGFR activation, promotes the phosphorylation of PARD3 to favor epithelial tight junction assembly. Participates in the phosphorylation of specific junctional components such as CTNND1 by stimulating the FYN and FER tyrosine kinases at cell-cell contacts. Upon T-cell stimulation by CXCL12, phosphorylates collapsin response mediator protein 2/DPYSL2 and induces T-cell migration. Participates in CD95L/FASLG signaling pathway and mediates AKT-mediated cell migration. Plays a role in cell cycle progression by phosphorylating the cyclin-dependent kinase 4/CDK4 thus regulating the G1 phase. Also involved in G2/M progression and cytokinesis. Catalyzes phosphorylation of organic cation transporter OCT2 which induces its transport activity. This chain is Tyrosine-protein kinase Yes (YES1), found in Homo sapiens (Human).